Reading from the N-terminus, the 331-residue chain is MKQTVYIASPESQQIHVWNLNHEGALTLTQVVDVPGQVQPMVVSPDKRYLYVGVRPEFRVLAYRIAPDDGALTFAAESALPGSPTHISTDHQGQFVFVGSYNAGNVSVTRLEDGLPVGVVDVVEGLDGCHSANISPDNRTLWVPALKQDRICLFTVSDDGHLVAQDPAEVTTIEGAGPRHMVFHPNEQYAYCVNELNSSVDVWELKDPHGNIECVQTLDIMPENFSDTRWAADIHITPDGRHLYACDRTASLITVFSVSEDGSVLSKEGFQPTETQPRGFNVDHSGKYLIAAGQKSHLISVYEIVGEQGLLHEKGRYAVGQGPMWVVVNAH.

Lys287 is subject to N6-acetyllysine.

It belongs to the cycloisomerase 2 family.

The enzyme catalyses 6-phospho-D-glucono-1,5-lactone + H2O = 6-phospho-D-gluconate + H(+). The protein operates within carbohydrate degradation; pentose phosphate pathway; D-ribulose 5-phosphate from D-glucose 6-phosphate (oxidative stage): step 2/3. Catalyzes the hydrolysis of 6-phosphogluconolactone to 6-phosphogluconate. The chain is 6-phosphogluconolactonase from Shigella boydii serotype 18 (strain CDC 3083-94 / BS512).